A 421-amino-acid chain; its full sequence is Alpha-tubulin N-acetyltransferase 1 (421 aa).

The region spanning 1–190 (MEFPFDVDAL…NNFVIFEGFF (190 aa)) is the N-acetyltransferase domain. Lysine 56 is subject to N6-acetyllysine; by autocatalysis. 124-137 (FYIHESVQRHGHGR) is a binding site for acetyl-CoA. Lysine 146 carries the N6-acetyllysine; by autocatalysis modification. Acetyl-CoA is bound at residue 160–169 (SPKLLKFLNK). Residues 214 to 235 (PIPAAPARKLPPKRAEGDIKPY) are disordered. A compositionally biased stretch (basic and acidic residues) spans 226–235 (KRAEGDIKPY). An N6-acetyllysine; by autocatalysis mark is found at lysine 233 and lysine 244. A disordered region spans residues 252 to 284 (PLNRAPRRATPPAHPPPRSSSLGNSPDRGPLRP). Residues serine 272 and serine 276 each carry the phosphoserine modification. Residue arginine 305 is modified to Asymmetric dimethylarginine. Residue serine 315 is modified to Phosphoserine. Arginine 323 carries the omega-N-methylarginine modification. Positions 342 to 351 (FNTSFLGTGN) are enriched in polar residues. The disordered stretch occupies residues 342-398 (FNTSFLGTGNQERKQGEQEAEDRSASEDQVLLQDGSGEEPTHTVAPRAQAPPAQSWM). Residues 352–367 (QERKQGEQEAEDRSAS) are compositionally biased toward basic and acidic residues.

It belongs to the acetyltransferase ATAT1 family. Component of the BBSome complex. Interacts with AP2 alpha-adaptins, including AP2A2, but not with AP1 gamma-adaptin (AP1G1/AP1G2); this interaction is required for efficient alpha-tubulin acetylation, hence clathrin-coated pits are sites of microtubule acetylation. In terms of processing, autoacetylation strongly increases tubulin acetylation.

Its subcellular location is the cytoplasm. The protein localises to the membrane. The protein resides in the clathrin-coated pit. It localises to the cell junction. It is found in the focal adhesion. Its subcellular location is the cell projection. The protein localises to the axon. The protein resides in the cytoskeleton. It localises to the spindle. The enzyme catalyses L-lysyl-[alpha-tubulin] + acetyl-CoA = N(6)-acetyl-L-lysyl-[alpha-tubulin] + CoA + H(+). In terms of biological role, specifically acetylates 'Lys-40' in alpha-tubulin on the lumenal side of microtubules. Promotes microtubule destabilization and accelerates microtubule dynamics; this activity may be independent of acetylation activity. Acetylates alpha-tubulin with a slow enzymatic rate, due to a catalytic site that is not optimized for acetyl transfer. Enters the microtubule through each end and diffuses quickly throughout the lumen of microtubules. Acetylates only long/old microtubules because of its slow acetylation rate since it does not have time to act on dynamically unstable microtubules before the enzyme is released. Required for normal sperm flagellar function. Promotes directional cell locomotion and chemotaxis, through AP2A2-dependent acetylation of alpha-tubulin at clathrin-coated pits that are concentrated at the leading edge of migrating cells. May facilitate primary cilium assembly. In Rattus norvegicus (Rat), this protein is Alpha-tubulin N-acetyltransferase 1.